The primary structure comprises 265 residues: Biogenesis of lysosome-related organelles complex 1 subunit KXD1 (265 aa).

Disordered regions lie at residues 1 to 63 (MSSD…DADV) and 79 to 111 (DRLI…SSTA). The span at 14–27 (QLVSQSPSINSQTY) shows a compositional bias: polar residues. A compositionally biased stretch (acidic residues) spans 52-63 (DDEDEEDDDADV). Positions 102–111 (HATSDVSSTA) are enriched in polar residues. The stretch at 196–245 (ELKQLINMSKDRLVDLQDKFEKGVQTSNRIKRNLKMSREKIQFLNDEFRT) forms a coiled coil.

The protein belongs to the KXD1 family. In terms of assembly, component of the biogenesis of lysosome-related organelles complex-1 (BLOC-1).

It is found in the endosome. Its function is as follows. Component of the biogenesis of lysosome-related organelles complex-1 (BLOC-1) involved in endosomal cargo sorting. The polypeptide is Biogenesis of lysosome-related organelles complex 1 subunit KXD1 (KXD1) (Vanderwaltozyma polyspora (strain ATCC 22028 / DSM 70294 / BCRC 21397 / CBS 2163 / NBRC 10782 / NRRL Y-8283 / UCD 57-17) (Kluyveromyces polysporus)).